Consider the following 603-residue polypeptide: Proline--tRNA ligase (603 aa).

Belongs to the class-II aminoacyl-tRNA synthetase family. ProS type 1 subfamily. As to quaternary structure, homodimer.

It is found in the cytoplasm. The catalysed reaction is tRNA(Pro) + L-proline + ATP = L-prolyl-tRNA(Pro) + AMP + diphosphate. Its function is as follows. Catalyzes the attachment of proline to tRNA(Pro) in a two-step reaction: proline is first activated by ATP to form Pro-AMP and then transferred to the acceptor end of tRNA(Pro). As ProRS can inadvertently accommodate and process non-cognate amino acids such as alanine and cysteine, to avoid such errors it has two additional distinct editing activities against alanine. One activity is designated as 'pretransfer' editing and involves the tRNA(Pro)-independent hydrolysis of activated Ala-AMP. The other activity is designated 'posttransfer' editing and involves deacylation of mischarged Ala-tRNA(Pro). The misacylated Cys-tRNA(Pro) is not edited by ProRS. The chain is Proline--tRNA ligase from Arthrobacter sp. (strain FB24).